A 63-amino-acid chain; its full sequence is Anaphase-promoting complex subunit 13 (63 aa).

A disordered region spans residues 36–63 (KTDDTEETNQETQQADAETWRDLALDTQ). Residues 53 to 63 (ETWRDLALDTQ) are compositionally biased toward basic and acidic residues.

Belongs to the APC13 family. In terms of assembly, component of the anaphase promoting complex/cyclosome (APC/C) complex. Expressed constitutively in roots, leaves, stems, buds, flowers, and seeds.

The protein localises to the nucleus. Its pathway is protein modification; protein ubiquitination. Component of the anaphase promoting complex/cyclosome (APC/C), a cell cycle-regulated E3 ubiquitin ligase that controls progression through mitosis and the G1 phase of the cell cycle. The APC/C complex acts by mediating ubiquitination and subsequent degradation of target proteins. Regulates global growth and development, including phyllotaxis and apical dominance. Required for pollen maturation. Promotes (pri) miRNA transcription of each MIR159 genes. The sequence is that of Anaphase-promoting complex subunit 13 from Arabidopsis thaliana (Mouse-ear cress).